Reading from the N-terminus, the 158-residue chain is Protein Smg homolog (158 aa).

This sequence belongs to the Smg family.

This is Protein Smg homolog from Thioalkalivibrio sulfidiphilus (strain HL-EbGR7).